We begin with the raw amino-acid sequence, 319 residues long: D-galacturonate reductase (319 aa).

The Proton donor role is filled by tyrosine 58. Histidine 121 provides a ligand contact to substrate. Residue 216-275 participates in NADP(+) binding; that stretch reads SPLGAARTKWGDDRVLGSDIIEEIAQAKGKSTAQISLRWVYEQGVSIVTKSYNKERMRQN.

It belongs to the aldo/keto reductase family. As to expression, expressed specifically in the receptacle tissue of the fruit.

It carries out the reaction L-galactonate + NADP(+) = aldehydo-D-galacturonate + NADPH + H(+). It participates in cofactor biosynthesis; L-ascorbate biosynthesis. In terms of biological role, involved in ascorbic acid (vitamin C) biosynthesis. This is D-galacturonate reductase (GALUR) from Fragaria ananassa (Strawberry).